The sequence spans 427 residues: tRNA(Ile)-lysidine synthase (427 aa).

21–26 (SGGADS) serves as a coordination point for ATP.

It belongs to the tRNA(Ile)-lysidine synthase family.

It localises to the cytoplasm. It catalyses the reaction cytidine(34) in tRNA(Ile2) + L-lysine + ATP = lysidine(34) in tRNA(Ile2) + AMP + diphosphate + H(+). Functionally, ligates lysine onto the cytidine present at position 34 of the AUA codon-specific tRNA(Ile) that contains the anticodon CAU, in an ATP-dependent manner. Cytidine is converted to lysidine, thus changing the amino acid specificity of the tRNA from methionine to isoleucine. The chain is tRNA(Ile)-lysidine synthase from Actinobacillus succinogenes (strain ATCC 55618 / DSM 22257 / CCUG 43843 / 130Z).